The primary structure comprises 711 residues: BCLAF1 and THRAP3 family member 3 (711 aa).

The segment covering 1–15 (MARSRSRSPRWKHRS) has biased composition (basic residues). Disordered regions lie at residues 1 to 42 (MARS…YRKD) and 48 to 67 (AWRM…PSRG). Residues S15 and S17 each carry the phosphoserine modification. Over residues 48 to 57 (AWRMDSEKHG) the composition is skewed to basic and acidic residues. Phosphoserine is present on residues S78, S80, and S187. Disordered regions lie at residues 94-350 (KPHR…KDSI) and 371-404 (EKIK…PSPI). 6 stretches are compositionally biased toward basic and acidic residues: residues 163-197 (FRFE…DFET), 204-213 (RYPEDRDFRK), 220-242 (RPKD…KPEH), 296-311 (SDGR…DRKY), 318-349 (LNRE…KKDS), and 371-383 (EKIK…RKES). Residue K400 forms a Glycyl lysine isopeptide (Lys-Gly) (interchain with G-Cter in SUMO2) linkage. 2 positions are modified to phosphoserine: S402 and S578.

It belongs to the BCLAF1/THRAP3 family.

It is found in the mitochondrion. The protein is BCLAF1 and THRAP3 family member 3 of Homo sapiens (Human).